We begin with the raw amino-acid sequence, 134 residues long: MADKIKLEVVTPERVVANEHVDFVVAPGVEGEIGILPFHAPLITSLDIGILRYTVEGKTEKIALSGGFLEVKGNKVVVLANAAERGEEIDVERAQRALERARERLARRTPDIDVLRAELAMRRALNRLKAAGKM.

This sequence belongs to the ATPase epsilon chain family. F-type ATPases have 2 components, CF(1) - the catalytic core - and CF(0) - the membrane proton channel. CF(1) has five subunits: alpha(3), beta(3), gamma(1), delta(1), epsilon(1). CF(0) has three main subunits: a, b and c.

It is found in the cell membrane. Produces ATP from ADP in the presence of a proton gradient across the membrane. In Carboxydothermus hydrogenoformans (strain ATCC BAA-161 / DSM 6008 / Z-2901), this protein is ATP synthase epsilon chain.